Here is a 359-residue protein sequence, read N- to C-terminus: UDP-N-acetylglucosamine--N-acetylmuramyl-(pentapeptide) pyrophosphoryl-undecaprenol N-acetylglucosamine transferase (359 aa).

UDP-N-acetyl-alpha-D-glucosamine contacts are provided by residues 12 to 14 (TGG), Asn124, Arg163, Ser191, Ile245, 264 to 269 (ALTVAE), and Gln290.

This sequence belongs to the glycosyltransferase 28 family. MurG subfamily.

It is found in the cell inner membrane. It carries out the reaction di-trans,octa-cis-undecaprenyl diphospho-N-acetyl-alpha-D-muramoyl-L-alanyl-D-glutamyl-meso-2,6-diaminopimeloyl-D-alanyl-D-alanine + UDP-N-acetyl-alpha-D-glucosamine = di-trans,octa-cis-undecaprenyl diphospho-[N-acetyl-alpha-D-glucosaminyl-(1-&gt;4)]-N-acetyl-alpha-D-muramoyl-L-alanyl-D-glutamyl-meso-2,6-diaminopimeloyl-D-alanyl-D-alanine + UDP + H(+). Its pathway is cell wall biogenesis; peptidoglycan biosynthesis. In terms of biological role, cell wall formation. Catalyzes the transfer of a GlcNAc subunit on undecaprenyl-pyrophosphoryl-MurNAc-pentapeptide (lipid intermediate I) to form undecaprenyl-pyrophosphoryl-MurNAc-(pentapeptide)GlcNAc (lipid intermediate II). In Nitrosococcus oceani (strain ATCC 19707 / BCRC 17464 / JCM 30415 / NCIMB 11848 / C-107), this protein is UDP-N-acetylglucosamine--N-acetylmuramyl-(pentapeptide) pyrophosphoryl-undecaprenol N-acetylglucosamine transferase.